The following is a 257-amino-acid chain: Nopaline permease ATP-binding protein P (257 aa).

In terms of domain architecture, ABC transporter spans 8–253; the sequence is LVAEDVHKNF…PTSPRCRAFL (246 aa). An ATP-binding site is contributed by 40–47; sequence GSSGSGKS.

This sequence belongs to the ABC transporter superfamily.

The protein localises to the cell inner membrane. Its function is as follows. Component of the nopaline active transport system probably consisting of four subunits: Q, M, P and T. This system is also capable of transporting octopine provided that catabolic functions are induced with nopaline. The protein is Nopaline permease ATP-binding protein P (nocP) of Agrobacterium fabrum (strain C58 / ATCC 33970) (Agrobacterium tumefaciens (strain C58)).